An 869-amino-acid chain; its full sequence is Aminopeptidase N (869 aa).

Residues glutamate 122 and 262-266 each bind substrate; that span reads GAMEN. Histidine 298 lines the Zn(2+) pocket. Glutamate 299 acts as the Proton acceptor in catalysis. 2 residues coordinate Zn(2+): histidine 302 and glutamate 321.

The protein belongs to the peptidase M1 family. Requires Zn(2+) as cofactor.

The protein resides in the cell inner membrane. The catalysed reaction is Release of an N-terminal amino acid, Xaa-|-Yaa- from a peptide, amide or arylamide. Xaa is preferably Ala, but may be most amino acids including Pro (slow action). When a terminal hydrophobic residue is followed by a prolyl residue, the two may be released as an intact Xaa-Pro dipeptide.. Aminopeptidase N is involved in the degradation of intracellular peptides generated by protein breakdown during normal growth as well as in response to nutrient starvation. This Haemophilus influenzae (strain ATCC 51907 / DSM 11121 / KW20 / Rd) protein is Aminopeptidase N (pepN).